Consider the following 421-residue polypeptide: MDLEAKVKKMGLGHEQGFGAPCLKCKEKCEGFELHFWRKICRNCKCGQEEHDVLLSNEEDRKVGKLFEDTKYTTLIAKLKSDGIPMYKRNVMILTNPVAAKKNVSINTVTYEWAPPVQNQALARQYMQMLPKEKQPVAGSEGAQYRKKQLAKQLPAHDQDPSKCHELSPKEVKEMEQFVKKYKSEALGVGDVKLPREMDAQGPNRMYIPSGDRSTPAAVGAMEDKSAEHKKTQYSCYCCKQSMKEGDPAIYAERAGYDKLWHPACFVCSTCHELLVDMIYFWKKGKLYCGRHYCDSEKPRCAGCDELIFSNEYTQAENQNWHLKHFCCFDCDNILAGEIYVMVNDKPVCKPCYVKNHAVVCQGCHNAIDPEVQRVTYNNFSWHASTECFLCSCCSKCLIGQKFMPVEGMVFCSVECKKMMS.

Positions 92–199 (MILTNPVAAK…GDVKLPREMD (108 aa)) constitute a PET domain. A disordered region spans residues 133-164 (EKQPVAGSEGAQYRKKQLAKQLPAHDQDPSKC). Positions 155-164 (PAHDQDPSKC) are enriched in basic and acidic residues. LIM zinc-binding domains lie at 234-297 (YSCY…CDSE), 299-359 (PRCA…NHAV), and 362-421 (QGCH…KMMS).

Belongs to the prickle / espinas / testin family. In terms of assembly, interacts via LIM domain 1 with ZYX. Interacts (via LIM domain 3) with ENAH and VASP. Interacts with ALKBH4, talin, actin, alpha-actinin, GRIP1 and PXN. Interacts (via LIM domain 2) with ACTL7A (via N-terminus). Heterodimer with ACTL7A; the heterodimer interacts with ENAH to form a heterotrimer.

The protein localises to the cytoplasm. It localises to the cell junction. Its subcellular location is the focal adhesion. In terms of biological role, scaffold protein that may play a role in cell adhesion, cell spreading and in the reorganization of the actin cytoskeleton. Plays a role in the regulation of cell proliferation. May act as a tumor suppressor. This chain is Testin (TES), found in Mustela putorius furo (European domestic ferret).